The following is a 412-amino-acid chain: 2,3-bisphosphoglycerate-independent phosphoglycerate mutase (412 aa).

The protein belongs to the BPG-independent phosphoglycerate mutase family. A-PGAM subfamily.

It catalyses the reaction (2R)-2-phosphoglycerate = (2R)-3-phosphoglycerate. Its pathway is carbohydrate degradation; glycolysis; pyruvate from D-glyceraldehyde 3-phosphate: step 3/5. Its function is as follows. Catalyzes the interconversion of 2-phosphoglycerate and 3-phosphoglycerate. This Methanobrevibacter smithii (strain ATCC 35061 / DSM 861 / OCM 144 / PS) protein is 2,3-bisphosphoglycerate-independent phosphoglycerate mutase.